The following is a 90-amino-acid chain: Probable Fe(2+)-trafficking protein (90 aa).

It belongs to the Fe(2+)-trafficking protein family.

Could be a mediator in iron transactions between iron acquisition and iron-requiring processes, such as synthesis and/or repair of Fe-S clusters in biosynthetic enzymes. This chain is Probable Fe(2+)-trafficking protein, found in Pseudomonas fluorescens (strain Pf0-1).